Consider the following 388-residue polypeptide: 3-sulfinopropanoyl-CoA desulfinase (388 aa).

Residues 121-124, Ser-130, and 153-156 each bind FAD; these read ICIT and HWIT. 240–241 contributes to the substrate binding site; sequence YN. FAD-binding positions include Arg-269, Gln-336, 363–367, and Gln-384; that span reads GGTAQ.

This sequence belongs to the acyl-CoA dehydrogenase family. As to quaternary structure, homotrimer or homotetramer. Requires FAD as cofactor.

The catalysed reaction is 3-sulfinopropanoyl-CoA + H2O = propanoyl-CoA + sulfite + H(+). Functionally, catalyzes the conversion 3-sulfinopropanoyl-CoA (3SP-CoA) to propanoyl-CoA by abstraction of sulfite. Does not show dehydrogenase activity. The polypeptide is 3-sulfinopropanoyl-CoA desulfinase (Paraburkholderia xenovorans (strain LB400)).